Consider the following 122-residue polypeptide: Glycine cleavage system H protein (122 aa).

The region spanning 22–103 (IGIIGISDYA…AFGSWFFKVE (82 aa)) is the Lipoyl-binding domain. K63 is subject to N6-lipoyllysine.

It belongs to the GcvH family. The glycine cleavage system is composed of four proteins: P, T, L and H. The cofactor is (R)-lipoate.

Functionally, the glycine cleavage system catalyzes the degradation of glycine. The H protein shuttles the methylamine group of glycine from the P protein to the T protein. This Treponema denticola (strain ATCC 35405 / DSM 14222 / CIP 103919 / JCM 8153 / KCTC 15104) protein is Glycine cleavage system H protein.